A 485-amino-acid chain; its full sequence is Pyruvate kinase (485 aa).

R33 lines the substrate pocket. Residues N35, S37, D67, and T68 each contribute to the K(+) site. 35-38 is an ATP binding site; the sequence is NFSH. Positions 74 and 155 each coordinate ATP. Residue E221 coordinates Mg(2+). G244, D245, and T277 together coordinate substrate. D245 lines the Mg(2+) pocket.

The protein belongs to the pyruvate kinase family. As to quaternary structure, homotetramer. Mg(2+) serves as cofactor. Requires K(+) as cofactor.

The enzyme catalyses pyruvate + ATP = phosphoenolpyruvate + ADP + H(+). Its pathway is carbohydrate degradation; glycolysis; pyruvate from D-glyceraldehyde 3-phosphate: step 5/5. This chain is Pyruvate kinase (pyk), found in Chlamydia trachomatis serovar D (strain ATCC VR-885 / DSM 19411 / UW-3/Cx).